The following is a 415-amino-acid chain: Serine/threonine transporter SstT (415 aa).

Helical transmembrane passes span isoleucine 23 to alanine 43, leucine 47 to valine 67, isoleucine 85 to phenylalanine 105, alanine 144 to leucine 164, alanine 181 to valine 201, leucine 220 to phenylalanine 240, isoleucine 293 to leucine 313, and valine 333 to isoleucine 353.

Belongs to the dicarboxylate/amino acid:cation symporter (DAACS) (TC 2.A.23) family.

It is found in the cell inner membrane. The catalysed reaction is L-serine(in) + Na(+)(in) = L-serine(out) + Na(+)(out). It carries out the reaction L-threonine(in) + Na(+)(in) = L-threonine(out) + Na(+)(out). Its function is as follows. Involved in the import of serine and threonine into the cell, with the concomitant import of sodium (symport system). In Klebsiella pneumoniae (strain 342), this protein is Serine/threonine transporter SstT.